We begin with the raw amino-acid sequence, 168 residues long: Transmembrane protein 31 (168 aa).

Over residues 1-11 (MRLTEKSEGEQ) the composition is skewed to basic and acidic residues. Residues 1 to 63 (MRLTEKSEGE…LPSRRTPTTS (63 aa)) are disordered. 2 stretches are compositionally biased toward polar residues: residues 13–22 (LKPNNSNAPN) and 35–48 (HTPARQRTQRADTQ). Low complexity predominate over residues 49–63 (PSRCRLPSRRTPTTS). The next 2 helical transmembrane spans lie at 119-139 (IGLPIILHLFALSTLYFYKFF) and 148-168 (FFILLVLLLLLFIIVFILIFF).

The protein resides in the membrane. The chain is Transmembrane protein 31 (TMEM31) from Homo sapiens (Human).